A 368-amino-acid polypeptide reads, in one-letter code: POU domain, class 3, transcription factor 1 (368 aa).

Residues 1 to 16 (MATTAQYIPRNNSLPS) show a composition bias toward polar residues. 4 disordered regions span residues 1 to 28 (MATTAQYIPRNNSLPSNPLMHPDSDRMH), 69 to 88 (TDWTSGTHIGQAEHNKASVQ), 100 to 134 (SHLVHQPTQNSHHGSWAPTTTHHLSPLSPASNGHQ), and 147 to 193 (SPQP…PSSD). A compositionally biased stretch (basic and acidic residues) spans 79-88 (QAEHNKASVQ). The segment covering 105–134 (QPTQNSHHGSWAPTTTHHLSPLSPASNGHQ) has biased composition (polar residues). Basic and acidic residues predominate over residues 155 to 170 (GLRDPLHDDAGSHDNQ). Residues 187-261 (EDAPSSDDLE…LLNKWLEETD (75 aa)) form the POU-specific domain. Positions 279 to 338 (KRKKRTSIEVGVKGALENHFLKCPKPSAHEITTLAGTLQLEKEVVRVWFCNRRQKEKRMT) form a DNA-binding region, homeobox.

It belongs to the POU transcription factor family. Class-3 subfamily. In terms of tissue distribution, predominantly expressed in the embryonic and adult central nervous system.

Its subcellular location is the nucleus. Functionally, transcription factor that may play important roles in patterning the embryonic brain. Could directly respond to the reception of the sonic hedgehog (shh) signal. The protein is POU domain, class 3, transcription factor 1 (pou3f1) of Danio rerio (Zebrafish).